Here is a 338-residue protein sequence, read N- to C-terminus: tRNA N6-adenosine threonylcarbamoyltransferase (338 aa).

Fe cation contacts are provided by H111 and H115. Substrate contacts are provided by residues L134 to G138, D167, G180, and N272. D300 serves as a coordination point for Fe cation.

This sequence belongs to the KAE1 / TsaD family. Requires Fe(2+) as cofactor.

Its subcellular location is the cytoplasm. It catalyses the reaction L-threonylcarbamoyladenylate + adenosine(37) in tRNA = N(6)-L-threonylcarbamoyladenosine(37) in tRNA + AMP + H(+). Its function is as follows. Required for the formation of a threonylcarbamoyl group on adenosine at position 37 (t(6)A37) in tRNAs that read codons beginning with adenine. Is involved in the transfer of the threonylcarbamoyl moiety of threonylcarbamoyl-AMP (TC-AMP) to the N6 group of A37, together with TsaE and TsaB. TsaD likely plays a direct catalytic role in this reaction. The polypeptide is tRNA N6-adenosine threonylcarbamoyltransferase (Aliivibrio salmonicida (strain LFI1238) (Vibrio salmonicida (strain LFI1238))).